The primary structure comprises 210 residues: dTTP/UTP pyrophosphatase (210 aa).

Catalysis depends on D89, which acts as the Proton acceptor.

The protein belongs to the Maf family. YhdE subfamily. A divalent metal cation is required as a cofactor.

Its subcellular location is the cytoplasm. The enzyme catalyses dTTP + H2O = dTMP + diphosphate + H(+). It catalyses the reaction UTP + H2O = UMP + diphosphate + H(+). In terms of biological role, nucleoside triphosphate pyrophosphatase that hydrolyzes dTTP and UTP. May have a dual role in cell division arrest and in preventing the incorporation of modified nucleotides into cellular nucleic acids. In Burkholderia thailandensis (strain ATCC 700388 / DSM 13276 / CCUG 48851 / CIP 106301 / E264), this protein is dTTP/UTP pyrophosphatase.